A 394-amino-acid polypeptide reads, in one-letter code: Small ribosomal subunit protein mS79 (rPPR3b) (394 aa).

The transit peptide at 1–24 (MSSLSRFLLRGNFSFSTHTNRRFF) directs the protein to the mitochondrion. PPR repeat units follow at residues 105–139 (KEGFVARIINLYGRVGMFENAQKVFDEMPERNCKR), 140–170 (TALSFNALLNACVNSKKFDLVEGIFKELPGK), 176–210 (DVASYNTLIKGLCGKGSFTEAVALIDEIENKGLKP), 211–245 (DHITFNILLHESYTKGKFEEGEQIWARMVEKNVKR), 246–280 (DIRSYNARLLGLAMENKSEEMVSLFDKLKGNELKP), 281–315 (DVFTFTAMIKGFVSEGKLDEAITWYKEIEKNGCRP), 316–350 (LKFVFNSLLPAICKAGDLESAYELCKEIFAKRLLV), and 351–385 (DEAVLQEVVDALVKGSKQDEAEEIVELAKTNDYLQ).

This sequence belongs to the PPR family. P subfamily. In terms of assembly, component of the mitochondrial ribosome small subunit.

The protein localises to the mitochondrion. This Arabidopsis thaliana (Mouse-ear cress) protein is Small ribosomal subunit protein mS79 (rPPR3b).